The primary structure comprises 150 residues: Lymphocyte antigen 6 complex locus protein G5c (150 aa).

A signal peptide spans 1 to 41 (MRFMAGPAGSQSLGPLCFHSSPQALYTVLLIVLVMMSLVFG). In terms of domain architecture, UPAR/Ly6 spans 60–150 (LRCYRCLLET…DPQNRGLYTP (91 aa)). Intrachain disulfides connect C62-C89, C65-C74, C81-C107, and C134-C139. N96 carries an N-linked (GlcNAc...) asparagine glycan.

In terms of assembly, forms oligomers. N-glycosylated. Detected in T-cell lines and fetal and adult lung.

The protein localises to the secreted. Its function is as follows. May have a role in hematopoietic cell differentiation. The polypeptide is Lymphocyte antigen 6 complex locus protein G5c (LY6G5C) (Homo sapiens (Human)).